Consider the following 591-residue polypeptide: Aspartate--tRNA(Asp/Asn) ligase (591 aa).

E175 serves as a coordination point for L-aspartate. The aspartate stretch occupies residues 199–202 (QQFK). R221 and H453 together coordinate L-aspartate. ATP is bound at residue 221–223 (RDE). E486 is a binding site for ATP. R493 is an L-aspartate binding site. 538–541 (GIDR) serves as a coordination point for ATP.

This sequence belongs to the class-II aminoacyl-tRNA synthetase family. Type 1 subfamily. Homodimer.

Its subcellular location is the cytoplasm. The catalysed reaction is tRNA(Asx) + L-aspartate + ATP = L-aspartyl-tRNA(Asx) + AMP + diphosphate. In terms of biological role, aspartyl-tRNA synthetase with relaxed tRNA specificity since it is able to aspartylate not only its cognate tRNA(Asp) but also tRNA(Asn). Reaction proceeds in two steps: L-aspartate is first activated by ATP to form Asp-AMP and then transferred to the acceptor end of tRNA(Asp/Asn). The polypeptide is Aspartate--tRNA(Asp/Asn) ligase (Cereibacter sphaeroides (strain ATCC 17029 / ATH 2.4.9) (Rhodobacter sphaeroides)).